Here is a 265-residue protein sequence, read N- to C-terminus: MVLSLILQLSTLWPACRADFTPTAPLASYPQPWLGAHPAAVVTPGINVTLTCRAPQSAWRFALFKSGLVTPLLLRDVSVELAEFFLEEVTPAQGGSYHCRYRKTDWGPGVWSQPSNVLELLVTDQLPRPSLVALPGPVVAPGANVSLRCAGRIPGMSFALYRVGVATPLQYIDSVQPWADFLLIGTHTPGTYCCYYHTPSAPYVLSQRSQPLVISFEGSGSLDYTQGNLIRLGLAGMVLICLGIIVTCDWHSRSSAFDGLLPQQN.

An N-terminal signal peptide occupies residues 1 to 18 (MVLSLILQLSTLWPACRA). Residues 19-231 (DFTPTAPLAS…LDYTQGNLIR (213 aa)) are Extracellular-facing. 2 consecutive Ig-like domains span residues 22–115 (PTAP…SQPS) and 125–218 (QLPR…SFEG). N-linked (GlcNAc...) asparagine glycosylation is present at asparagine 47. Cysteine 52 and cysteine 99 are disulfide-bonded. Residue asparagine 144 is glycosylated (N-linked (GlcNAc...) asparagine). Residues 232–248 (LGLAGMVLICLGIIVTC) form a helical membrane-spanning segment. The Cytoplasmic segment spans residues 249 to 265 (DWHSRSSAFDGLLPQQN).

The protein belongs to the leukocyte receptor complex/polymeric immunoglobulin receptor (PIR/LRC) family. In terms of tissue distribution, specifically expressed in preosteoclasts or mature osteoclasts.

Its subcellular location is the cell membrane. Its function is as follows. Regulator of osteoclastogenesis which plays an important bone-specific function in osteoclast differentiation. This is Osteoclast-associated immunoglobulin-like receptor (Oscar) from Mus musculus (Mouse).